The primary structure comprises 884 residues: Alanine--tRNA ligase (884 aa).

Histidine 565, histidine 569, cysteine 674, and histidine 678 together coordinate Zn(2+).

It belongs to the class-II aminoacyl-tRNA synthetase family. Zn(2+) serves as cofactor.

It is found in the cytoplasm. The enzyme catalyses tRNA(Ala) + L-alanine + ATP = L-alanyl-tRNA(Ala) + AMP + diphosphate. Its function is as follows. Catalyzes the attachment of alanine to tRNA(Ala) in a two-step reaction: alanine is first activated by ATP to form Ala-AMP and then transferred to the acceptor end of tRNA(Ala). Also edits incorrectly charged Ser-tRNA(Ala) and Gly-tRNA(Ala) via its editing domain. The protein is Alanine--tRNA ligase of Xanthobacter autotrophicus (strain ATCC BAA-1158 / Py2).